The sequence spans 366 residues: UDP-N-acetylglucosamine--N-acetylmuramyl-(pentapeptide) pyrophosphoryl-undecaprenol N-acetylglucosamine transferase (366 aa).

UDP-N-acetyl-alpha-D-glucosamine is bound by residues 10–12 (TGG), N124, S195, and Q295.

It belongs to the glycosyltransferase 28 family. MurG subfamily.

Its subcellular location is the cell membrane. It catalyses the reaction di-trans,octa-cis-undecaprenyl diphospho-N-acetyl-alpha-D-muramoyl-L-alanyl-D-glutamyl-meso-2,6-diaminopimeloyl-D-alanyl-D-alanine + UDP-N-acetyl-alpha-D-glucosamine = di-trans,octa-cis-undecaprenyl diphospho-[N-acetyl-alpha-D-glucosaminyl-(1-&gt;4)]-N-acetyl-alpha-D-muramoyl-L-alanyl-D-glutamyl-meso-2,6-diaminopimeloyl-D-alanyl-D-alanine + UDP + H(+). The protein operates within cell wall biogenesis; peptidoglycan biosynthesis. Functionally, cell wall formation. Catalyzes the transfer of a GlcNAc subunit on undecaprenyl-pyrophosphoryl-MurNAc-pentapeptide (lipid intermediate I) to form undecaprenyl-pyrophosphoryl-MurNAc-(pentapeptide)GlcNAc (lipid intermediate II). The polypeptide is UDP-N-acetylglucosamine--N-acetylmuramyl-(pentapeptide) pyrophosphoryl-undecaprenol N-acetylglucosamine transferase (Bacillus licheniformis (strain ATCC 14580 / DSM 13 / JCM 2505 / CCUG 7422 / NBRC 12200 / NCIMB 9375 / NCTC 10341 / NRRL NRS-1264 / Gibson 46)).